A 931-amino-acid chain; its full sequence is Up-regulator of cell proliferation (931 aa).

Phosphoserine is present on Ser-3. Positions 689–929 (RSRLVVLSTV…NIQQLIELVR (241 aa)) constitute a VLIG-type G domain.

The protein belongs to the TRAFAC class dynamin-like GTPase superfamily. Very large inducible GTPase (VLIG) family. Strongly expressed in hepatitis B virus-infected liver and in HCC cells. Also highly expressed in well-differentiated gastric cancer tissues and various gastric cancer cell lines.

The protein localises to the cytoplasm. The protein resides in the nucleus. Its function is as follows. May be involved in cell cycle progression through the regulation of cyclin D1 expression. May participate in the development of hepatocellular carcinoma (HCC) by promoting hepatocellular growth and survival. May play an important role in development of gastric cancer. In Homo sapiens (Human), this protein is Up-regulator of cell proliferation (URGCP).